The following is a 1401-amino-acid chain: DNA-directed RNA polymerase subunit beta' (1401 aa).

Zn(2+)-binding residues include Cys70, Cys72, Cys85, and Cys88. Asp460, Asp462, and Asp464 together coordinate Mg(2+). Residues Cys808, Cys882, Cys889, and Cys892 each coordinate Zn(2+).

This sequence belongs to the RNA polymerase beta' chain family. In terms of assembly, the RNAP catalytic core consists of 2 alpha, 1 beta, 1 beta' and 1 omega subunit. When a sigma factor is associated with the core the holoenzyme is formed, which can initiate transcription. Requires Mg(2+) as cofactor. Zn(2+) is required as a cofactor.

It catalyses the reaction RNA(n) + a ribonucleoside 5'-triphosphate = RNA(n+1) + diphosphate. In terms of biological role, DNA-dependent RNA polymerase catalyzes the transcription of DNA into RNA using the four ribonucleoside triphosphates as substrates. The protein is DNA-directed RNA polymerase subunit beta' of Legionella pneumophila (strain Paris).